We begin with the raw amino-acid sequence, 416 residues long: CBL-interacting serine/threonine-protein kinase 21 (416 aa).

The 253-residue stretch at 12–264 (YEIGRTIGEG…AEIIIKDSWF (253 aa)) folds into the Protein kinase domain. ATP is bound by residues 18-26 (IGEGNFAKV) and lysine 41. The active-site Proton acceptor is the aspartate 134. An activation loop region spans residues 152 to 178 (DFGLSAVPKSGDMLSTACGSPCYIAPE). Phosphoserine is present on serine 156. Threonine 167 is subject to Phosphothreonine. Positions 291–315 (ASSNFINAFQIIAMSSDLDLSGLFE) constitute an NAF domain. The tract at residues 321–351 (RYKTRIGSKNTAQETIKKIEAAATYVSLSVE) is PPI.

This sequence belongs to the protein kinase superfamily. CAMK Ser/Thr protein kinase family. SNF1 subfamily. Interacts with CBL9. It depends on Mn(2+) as a cofactor.

It carries out the reaction L-seryl-[protein] + ATP = O-phospho-L-seryl-[protein] + ADP + H(+). The enzyme catalyses L-threonyl-[protein] + ATP = O-phospho-L-threonyl-[protein] + ADP + H(+). CIPK serine-threonine protein kinases interact with CBL proteins. Binding of a CBL protein to the regulatory NAF domain of CIPK protein lead to the activation of the kinase in a calcium-dependent manner. This Arabidopsis thaliana (Mouse-ear cress) protein is CBL-interacting serine/threonine-protein kinase 21 (CIPK21).